Consider the following 455-residue polypeptide: tRNA modification GTPase MnmE (455 aa).

Positions 24, 81, and 120 each coordinate (6S)-5-formyl-5,6,7,8-tetrahydrofolate. One can recognise a TrmE-type G domain in the interval G216 to G378. K(+) is bound at residue N226. GTP contacts are provided by residues N226–S231, T245–T251, D270–G273, N335–D338, and S359–R361. Residue S230 coordinates Mg(2+). Residues T245, I247, and T250 each contribute to the K(+) site. T251 contributes to the Mg(2+) binding site. K455 lines the (6S)-5-formyl-5,6,7,8-tetrahydrofolate pocket.

It belongs to the TRAFAC class TrmE-Era-EngA-EngB-Septin-like GTPase superfamily. TrmE GTPase family. Homodimer. Heterotetramer of two MnmE and two MnmG subunits. K(+) serves as cofactor.

The protein localises to the cytoplasm. Exhibits a very high intrinsic GTPase hydrolysis rate. Involved in the addition of a carboxymethylaminomethyl (cmnm) group at the wobble position (U34) of certain tRNAs, forming tRNA-cmnm(5)s(2)U34. The polypeptide is tRNA modification GTPase MnmE (Pseudomonas aeruginosa (strain ATCC 15692 / DSM 22644 / CIP 104116 / JCM 14847 / LMG 12228 / 1C / PRS 101 / PAO1)).